Here is a 284-residue protein sequence, read N- to C-terminus: F-box only protein 6 (284 aa).

One can recognise an F-box domain in the interval 1-48; sequence MVNINELPENILLELFTHVPAPQLLRNCRLVCSLWRDLIDVMTLWKRK. Residues 69–250 form the FBA domain; it reads FYILCSLQRN…VTNSSIIVSH (182 aa). A phosphoserine mark is found at S249, S268, S275, S278, and S283.

As to quaternary structure, part of a SCF (SKP1-cullin-F-box) protein ligase complex. Interacts with VCP, CHEK1 and CUL1.

The protein localises to the cytoplasm. Its pathway is protein modification; protein ubiquitination. Functionally, substrate-recognition component of some SCF (SKP1-CUL1-F-box protein)-type E3 ubiquitin ligase complexes. Involved in endoplasmic reticulum-associated degradation pathway (ERAD) for misfolded lumenal proteins by recognizing and binding sugar chains on unfolded glycoproteins that are retrotranslocated into the cytosol and promoting their ubiquitination and subsequent degradation. Able to recognize and bind denatured glycoproteins, which are modified with not only high-mannose but also complex-type oligosaccharides. Also recognizes sulfated glycans. Also involved in DNA damage response by specifically recognizing activated CHEK1 (phosphorylated on 'Ser-345'), promoting its ubiquitination and degradation. Ubiquitination of CHEK1 is required to ensure that activated CHEK1 does not accumulate as cells progress through S phase, or when replication forks encounter transient impediments during normal DNA replication. The sequence is that of F-box only protein 6 (Fbxo6) from Rattus norvegicus (Rat).